A 63-amino-acid polypeptide reads, in one-letter code: Conotoxin Vi5.1b (63 aa).

An N-terminal signal peptide occupies residues M1–S22. Positions Q23–S50 are excised as a propeptide. P62 bears the Proline amide mark.

The protein belongs to the conotoxin T superfamily. Contains 2 disulfide bonds that can be either 'C1-C3, C2-C4' or 'C1-C4, C2-C3', since these disulfide connectivities have been observed for conotoxins with cysteine framework V (for examples, see AC P0DQQ7 and AC P81755). In terms of tissue distribution, expressed by the venom duct.

Its subcellular location is the secreted. This chain is Conotoxin Vi5.1b, found in Conus virgo (Virgin cone).